The primary structure comprises 316 residues: Meiotically up-regulated gene 154 protein (316 aa).

Transmembrane regions (helical) follow at residues 41-61 (YSIP…IYIK), 88-108 (AFLS…FIFS), 159-179 (FLLN…WFYS), and 186-206 (LLTF…SLLL). The disordered stretch occupies residues 291 to 316 (HDSGISRDSSSPFKRFPHLSDGSSRF).

The protein resides in the endoplasmic reticulum membrane. Has a role in meiosis. The polypeptide is Meiotically up-regulated gene 154 protein (mug154) (Schizosaccharomyces pombe (strain 972 / ATCC 24843) (Fission yeast)).